The following is a 358-amino-acid chain: MNATLRIRNRPVAESTYTSLRGAKAEVVRVEREEREIHPKPPFETGTMLQAATRRLRLSSERVMQLAQDLFEGGLITYHRTDSTRVSEEGKRVARDYIRANFDPEDYNPRTWEPEAEHVEGAHECIRPTRPADAEELRTMVREGAIQTTVTLTSHHLRLYDLVFRRFVASQMKPAKVLYQEAVLEVEVKGVPVAELELSGVLEIVEPGFTKVLTEYDLPAYGIRETPELEEGDRLEIGDVEVLERHEEYPYDQSELVEDMRERGLGRPSTYAQIVEKLFRRGYVYEVPQRRWIFPTTRGEAVYEYLSTHYERFVSEETTRDLEERMDAVALGKAEYQEEMEKLYLELERVVEMPDPEP.

The 351-residue stretch at 1 to 351 folds into the Topo IA-type catalytic domain; it reads MNATLRIRNR…KLYLELERVV (351 aa). Y78 functions as the O-(5'-phospho-DNA)-tyrosine intermediate in the catalytic mechanism.

It belongs to the type IA topoisomerase family. In terms of assembly, heterodimer of an RgyrA and RgyrB subunit. The topoisomerase domain is shared between the two subunits. It depends on Mg(2+) as a cofactor.

It localises to the cytoplasm. Its function is as follows. Modifies the topological state of DNA by introducing positive supercoils in an ATP-dependent process; dATP also allows positive supercoiling. Increases the linking number in steps of +1. Only this subunit binds DNA, in isolation it does not hydrolyze ATP. Hydrolyzes ATP only in the presence of DNA. Transiently cleaves a single DNA strand and remains covalently bound to the 5' DNA end probably through a tyrosine residue. It changes linking number in steps of one, and nicks DNA preferentially at 5'-CNNN | 3'-sites with a strong preference for 4 pyrimidine residues. There are about 1000 heterodimers per cell. May be involved in rewinding the DNA strands in the regions of the chromosome that have opened up to allow transcription or replication. In terms of biological role, reverse gyrase activity is reconstituted after incubation at 80 degrees Celsius for 5 minutes, positive supercoiling requires ATP and Mg(2+). In the presence of ATP it binds and nicks substrate but does not make closed product. The protein is Reverse gyrase subunit A of Methanopyrus kandleri (strain AV19 / DSM 6324 / JCM 9639 / NBRC 100938).